A 322-amino-acid chain; its full sequence is CRISPR-associated endonuclease Cas1 (322 aa).

Mn(2+) is bound by residues glutamate 149, histidine 214, and glutamate 229.

It belongs to the CRISPR-associated endonuclease Cas1 family. In terms of assembly, homodimer, forms a heterotetramer with a Cas2 homodimer. Mg(2+) serves as cofactor. It depends on Mn(2+) as a cofactor.

Its function is as follows. CRISPR (clustered regularly interspaced short palindromic repeat), is an adaptive immune system that provides protection against mobile genetic elements (viruses, transposable elements and conjugative plasmids). CRISPR clusters contain spacers, sequences complementary to antecedent mobile elements, and target invading nucleic acids. CRISPR clusters are transcribed and processed into CRISPR RNA (crRNA). Acts as a dsDNA endonuclease. Involved in the integration of spacer DNA into the CRISPR cassette. The protein is CRISPR-associated endonuclease Cas1 of Methanocaldococcus jannaschii (strain ATCC 43067 / DSM 2661 / JAL-1 / JCM 10045 / NBRC 100440) (Methanococcus jannaschii).